We begin with the raw amino-acid sequence, 151 residues long: MKYQQLENLESGWKWKYLVKKHREGELITRYIEASAAQEAVDLLLTLENEPVKVNDWIAKHMNPALVNRMKQTIRARRKRHFNAEHQHTRKKSIDLEFMVWQRLAGLAHRRGKTLSETIVQLIEDAEHKEKYANTMSSLKQDLQALLGKND.

Belongs to the MatP family. As to quaternary structure, homodimer.

The protein resides in the cytoplasm. Its function is as follows. Required for spatial organization of the terminus region of the chromosome (Ter macrodomain) during the cell cycle. Prevents early segregation of duplicated Ter macrodomains during cell division. Binds specifically to matS, which is a 13 bp signature motif repeated within the Ter macrodomain. The chain is Macrodomain Ter protein from Escherichia fergusonii (strain ATCC 35469 / DSM 13698 / CCUG 18766 / IAM 14443 / JCM 21226 / LMG 7866 / NBRC 102419 / NCTC 12128 / CDC 0568-73).